Reading from the N-terminus, the 444-residue chain is 1,4-beta-D-glucan glucohydrolase (444 aa).

The active-site Proton donor is glutamate 164. The active-site Nucleophile is glutamate 349.

The protein belongs to the glycosyl hydrolase 1 family. Monomer.

It catalyses the reaction Hydrolysis of (1-&gt;4)-linkages in (1-&gt;4)-beta-D-glucans, to remove successive glucose units.. The enzyme catalyses Hydrolysis of terminal, non-reducing beta-D-glucosyl residues with release of beta-D-glucose.. It participates in glycan metabolism; cellulose degradation. It functions in the pathway glycan metabolism; beta-D-glucan degradation. With respect to regulation, activated by glucose up to 200 mM when p-nitrophenyl-beta-glucoside is used as the substrate. This activation by end product concentrations may be due to a transglycosylation activity of the enzyme. Functionally, broad substrate specificity glycosidase. Releases glucose from soluble glucooligomers, with a preference for longer oligomers; acts more readily on cellotetraose than on cellobiose. Displays similar activities towards the disaccharides lactose and cellobiose. Is also able to hydrolyze various aryl-beta-glycosides in vitro. The sequence is that of 1,4-beta-D-glucan glucohydrolase from Thermotoga neapolitana (strain ATCC 49049 / DSM 4359 / NBRC 107923 / NS-E).